The sequence spans 375 residues: Probable Na(+)/H(+) antiporter GerT (375 aa).

A run of 10 helical transmembrane segments spans residues 27–47 (PSVLGKLIVGIIIGPAVLGII), 89–109 (AGGIIFPFIGGYVTGLLFGLI), 112–132 (HAIFLGLLLCATSVSITVQTL), 145–165 (TILGAAVFDDVIVVILLAFVM), 183–203 (IIFFVSIVFIAWKVVPWIMKM), 204–224 (LVPLRVTEALISAALIICFSF), 226–246 (YYSEMMGIAGIIGAFAAGIAI), 261–281 (PIAYAIFVPVFFVSIGMEITF), 288–308 (LWFIIIMTLIAIFTKLIGSGL), and 350–370 (ENFTAIVIVVILTTIITPPLL).

It belongs to the monovalent cation:proton antiporter 2 (CPA2) transporter (TC 2.A.37) family.

It localises to the membrane. In terms of biological role, contributes to the success of spore outgrowth from the germinated state during alkaline or Na(+) stress. Does not have a significant role in germination. This chain is Probable Na(+)/H(+) antiporter GerT (gerT), found in Bacillus cereus.